The primary structure comprises 163 residues: Succinate dehydrogenase assembly factor 2, mitochondrial (163 aa).

It belongs to the SDHAF2 family. As to quaternary structure, interacts with the flavoprotein subunit within the SDH catalytic dimer.

Its subcellular location is the mitochondrion matrix. In terms of biological role, plays an essential role in the assembly of succinate dehydrogenase (SDH), an enzyme complex (also referred to as respiratory complex II) that is a component of both the tricarboxylic acid (TCA) cycle and the mitochondrial electron transport chain, and which couples the oxidation of succinate to fumarate with the reduction of ubiquinone (coenzyme Q) to ubiquinol. Required for flavinylation (covalent attachment of FAD) of the flavoprotein subunit of the SDH catalytic dimer. The chain is Succinate dehydrogenase assembly factor 2, mitochondrial from Kluyveromyces lactis (strain ATCC 8585 / CBS 2359 / DSM 70799 / NBRC 1267 / NRRL Y-1140 / WM37) (Yeast).